We begin with the raw amino-acid sequence, 588 residues long: MAAHDDDMNRGIRPGRGSEDPAGQVAYLEQEIAVLRRKLAESPRHTRILEERIVELQTNLAGVSAQNERLAGTLREARDQIVALKEEVDRLAQPPAGFGVFLQANEDGTADIFTGGRKLRVNVSPSVELDELRRGQEVMLNEALNVVEAMEYESVGDIVTLKEILEDGERALVLGHTDEERVVRLAEPLRGLTIRPGDALLLEPRSGYVYEVVPKSEVEELVLEEVPDIGYEQIGGLGGQIEMIRDAVELPYLYPDLFREHELRPPKGVLLYGPPGCGKTLIAKAVANSLAKKVAEVTGQAAGKSFFLNIKGPELLNKYVGETERQIRLVFQRAREKASEGTPVIVFFDEMESLFRTRGSGVSSDVENTIVPQLLAEIDGVEGLQNVVVIGASNREDMIDPAILRPGRLDVKIKIERPDAEAAKDIFGKYLTERLPLHSDDLAEHEKDKSATVSSMIQTAVEQMYAESEENRFLEVTYANGDKEVLYFKDFNSGAMIENIVGRAKKMAIKDFLDKNQKGLRVSHLLQACVDEFKENEDLPNTTNPDDWARISGKKGERIVYIRTLVTGKQGADTGRSIDTVANTGQYL.

Residues 1-10 are compositionally biased toward basic and acidic residues; the sequence is MAAHDDDMNR. The tract at residues 1 to 23 is disordered; it reads MAAHDDDMNRGIRPGRGSEDPAG. Residues 47 to 94 are a coiled coil; it reads RILEERIVELQTNLAGVSAQNERLAGTLREARDQIVALKEEVDRLAQP. 276–281 is an ATP binding site; the sequence is GCGKTL. Positions 587–588 are docks into pockets in the proteasome alpha-ring; sequence YL.

It belongs to the AAA ATPase family. In terms of assembly, homohexamer. Assembles into a hexameric ring structure that caps the 20S proteasome core. Strongly interacts with the prokaryotic ubiquitin-like protein Pup through a hydrophobic interface; the interacting region of ARC lies in its N-terminal coiled-coil domain. There is one Pup binding site per ARC hexamer ring. Upon ATP-binding, the C-terminus of ARC interacts with the alpha-rings of the proteasome core, possibly by binding to the intersubunit pockets.

Its pathway is protein degradation; proteasomal Pup-dependent pathway. Functionally, ATPase which is responsible for recognizing, binding, unfolding and translocation of pupylated proteins into the bacterial 20S proteasome core particle. May be essential for opening the gate of the 20S proteasome via an interaction with its C-terminus, thereby allowing substrate entry and access to the site of proteolysis. Thus, the C-termini of the proteasomal ATPase may function like a 'key in a lock' to induce gate opening and therefore regulate proteolysis. This is Proteasome-associated ATPase from Streptomyces coelicolor (strain ATCC BAA-471 / A3(2) / M145).